Reading from the N-terminus, the 435-residue chain is 5-methylthioadenosine/S-adenosylhomocysteine deaminase (435 aa).

2 residues coordinate Zn(2+): histidine 65 and histidine 67. Residues glutamate 94, arginine 150, and histidine 189 each coordinate substrate. Histidine 216 is a Zn(2+) binding site. 2 residues coordinate substrate: glutamate 219 and aspartate 304. Aspartate 304 provides a ligand contact to Zn(2+).

It belongs to the metallo-dependent hydrolases superfamily. MTA/SAH deaminase family. It depends on Zn(2+) as a cofactor.

The catalysed reaction is S-adenosyl-L-homocysteine + H2O + H(+) = S-inosyl-L-homocysteine + NH4(+). It catalyses the reaction S-methyl-5'-thioadenosine + H2O + H(+) = S-methyl-5'-thioinosine + NH4(+). In terms of biological role, catalyzes the deamination of 5-methylthioadenosine and S-adenosyl-L-homocysteine into 5-methylthioinosine and S-inosyl-L-homocysteine, respectively. Is also able to deaminate adenosine. This is 5-methylthioadenosine/S-adenosylhomocysteine deaminase from Bacillus cytotoxicus (strain DSM 22905 / CIP 110041 / 391-98 / NVH 391-98).